Here is a 216-residue protein sequence, read N- to C-terminus: FMN-dependent NADH:quinone oxidoreductase (216 aa).

FMN contacts are provided by residues 15–17 and 139–142; these read SVS and SRGG.

The protein belongs to the azoreductase type 1 family. As to quaternary structure, homodimer. FMN serves as cofactor.

It catalyses the reaction 2 a quinone + NADH + H(+) = 2 a 1,4-benzosemiquinone + NAD(+). It carries out the reaction N,N-dimethyl-1,4-phenylenediamine + anthranilate + 2 NAD(+) = 2-(4-dimethylaminophenyl)diazenylbenzoate + 2 NADH + 2 H(+). In terms of biological role, quinone reductase that provides resistance to thiol-specific stress caused by electrophilic quinones. Functionally, also exhibits azoreductase activity. Catalyzes the reductive cleavage of the azo bond in aromatic azo compounds to the corresponding amines. The protein is FMN-dependent NADH:quinone oxidoreductase of Acidovorax ebreus (strain TPSY) (Diaphorobacter sp. (strain TPSY)).